The primary structure comprises 461 residues: Bifunctional protein GlmU (461 aa).

The segment at 1 to 243 (MNATVPSAAP…EDELRGINSR (243 aa)) is pyrophosphorylase. Residues 24–27 (LAAG), Lys-38, Gln-86, 91–92 (GT), 112–114 (YGD), Gly-155, Glu-169, Asn-184, and Asn-241 each bind UDP-N-acetyl-alpha-D-glucosamine. Asp-114 provides a ligand contact to Mg(2+). Asn-241 is a Mg(2+) binding site. Residues 244–264 (AELAEAEACVQRRLRAAALDG) are linker. An N-acetyltransferase region spans residues 265 to 461 (GATLVAPETV…AALRRKKEQG (197 aa)). UDP-N-acetyl-alpha-D-glucosamine-binding residues include Arg-330 and Lys-348. Residue His-360 is the Proton acceptor of the active site. UDP-N-acetyl-alpha-D-glucosamine is bound by residues Tyr-363 and Asn-374. Acetyl-CoA contacts are provided by residues Ala-377, 383–384 (NY), Ser-402, Ala-420, and Arg-437.

The protein in the N-terminal section; belongs to the N-acetylglucosamine-1-phosphate uridyltransferase family. It in the C-terminal section; belongs to the transferase hexapeptide repeat family. Homotrimer. Mg(2+) is required as a cofactor.

It localises to the cytoplasm. It carries out the reaction alpha-D-glucosamine 1-phosphate + acetyl-CoA = N-acetyl-alpha-D-glucosamine 1-phosphate + CoA + H(+). It catalyses the reaction N-acetyl-alpha-D-glucosamine 1-phosphate + UTP + H(+) = UDP-N-acetyl-alpha-D-glucosamine + diphosphate. It participates in nucleotide-sugar biosynthesis; UDP-N-acetyl-alpha-D-glucosamine biosynthesis; N-acetyl-alpha-D-glucosamine 1-phosphate from alpha-D-glucosamine 6-phosphate (route II): step 2/2. The protein operates within nucleotide-sugar biosynthesis; UDP-N-acetyl-alpha-D-glucosamine biosynthesis; UDP-N-acetyl-alpha-D-glucosamine from N-acetyl-alpha-D-glucosamine 1-phosphate: step 1/1. It functions in the pathway bacterial outer membrane biogenesis; LPS lipid A biosynthesis. Functionally, catalyzes the last two sequential reactions in the de novo biosynthetic pathway for UDP-N-acetylglucosamine (UDP-GlcNAc). The C-terminal domain catalyzes the transfer of acetyl group from acetyl coenzyme A to glucosamine-1-phosphate (GlcN-1-P) to produce N-acetylglucosamine-1-phosphate (GlcNAc-1-P), which is converted into UDP-GlcNAc by the transfer of uridine 5-monophosphate (from uridine 5-triphosphate), a reaction catalyzed by the N-terminal domain. This is Bifunctional protein GlmU from Gluconacetobacter diazotrophicus (strain ATCC 49037 / DSM 5601 / CCUG 37298 / CIP 103539 / LMG 7603 / PAl5).